The following is a 303-amino-acid chain: D-alanine--D-alanine ligase (303 aa).

In terms of domain architecture, ATP-grasp spans 99-293 (TYRFLKDIVE…FEELVEIILK (195 aa)). ATP is bound at residue 125-176 (GYPCVVKPRREGSSIGVFICESDEEFQHALKEDLPRYGSVIVQKYIPGREMT). Mg(2+) contacts are provided by aspartate 248, glutamate 260, and asparagine 262.

It belongs to the D-alanine--D-alanine ligase family. Mg(2+) is required as a cofactor. Requires Mn(2+) as cofactor.

The protein localises to the cytoplasm. The catalysed reaction is 2 D-alanine + ATP = D-alanyl-D-alanine + ADP + phosphate + H(+). It participates in cell wall biogenesis; peptidoglycan biosynthesis. Cell wall formation. This chain is D-alanine--D-alanine ligase, found in Thermotoga petrophila (strain ATCC BAA-488 / DSM 13995 / JCM 10881 / RKU-1).